A 171-amino-acid polypeptide reads, in one-letter code: Nucleoside-triphosphatase THEP1 (171 aa).

Residues 8–15 (GPPGAGKS) and 95–102 (VYLIDEIG) contribute to the ATP site.

Belongs to the THEP1 NTPase family.

It catalyses the reaction a ribonucleoside 5'-triphosphate + H2O = a ribonucleoside 5'-diphosphate + phosphate + H(+). In terms of biological role, has nucleotide phosphatase activity towards ATP, GTP, CTP, TTP and UTP. May hydrolyze nucleoside diphosphates with lower efficiency. In Ignicoccus hospitalis (strain KIN4/I / DSM 18386 / JCM 14125), this protein is Nucleoside-triphosphatase THEP1.